Here is a 471-residue protein sequence, read N- to C-terminus: Metal tolerance protein C1 (471 aa).

Topologically, residues 1–78 (MGIIRFQILN…PGEEGEKIFR (78 aa)) are cytoplasmic. The chain crosses the membrane as a helical span at residues 79-99 (LGLTADIGLSVAKALTGYLCG). At 100–101 (ST) the chain is on the vacuolar side. Residues 102 to 122 (AIIADAAHSVSDVVLSGVALV) traverse the membrane as a helical segment. Residues 123–144 (SYRAANVPKDKEHPYGHGKFET) lie on the Cytoplasmic side of the membrane. The chain crosses the membrane as a helical span at residues 145-165 (LGALGISAMLLATGSGIAWHA). Residues 166–192 (LDLLSIALSAAPEVIHSGHHHGIDMNH) lie on the Vacuolar side of the membrane. A helical transmembrane segment spans residues 193–213 (PILALTVTIASISIKEGLYWI). Residues 214–236 (TKRAGEKQGSGLMMANAWHHRSD) lie on the Cytoplasmic side of the membrane. A helical membrane pass occupies residues 237–257 (AISSLVALVGVGGSILGVNFL). At 258–423 (DPLAGLVVST…RITPHLLHSK (166 aa)) the chain is on the vacuolar side. The chain crosses the membrane as a helical span at residues 424 to 444 (ILLQIVVAMPSTMSIQDVMIA). At 445 to 471 (AEHAEKEILKAAPNVARVSIQLSLNSE) the chain is on the cytoplasmic side.

The protein belongs to the cation diffusion facilitator (CDF) transporter (TC 2.A.4) family.

It localises to the vacuole membrane. Its function is as follows. Involved in sequestration of excess metal in the cytoplasm into vacuoles to maintain metal homeostasis. In Arabidopsis thaliana (Mouse-ear cress), this protein is Metal tolerance protein C1 (MTPC1).